The primary structure comprises 412 residues: uncharacterized protein (412 aa).

Residue His49 coordinates Zn(2+). Residue Glu52 is the Proton acceptor of the active site. Zn(2+) is bound by residues His53 and Glu129.

The protein belongs to the peptidase M16 family. It depends on Zn(2+) as a cofactor.

This is an uncharacterized protein from Rickettsia typhi (strain ATCC VR-144 / Wilmington).